The chain runs to 158 residues: Succinate dehydrogenase [ubiquinone] cytochrome b small subunit B, mitochondrial (158 aa).

A mitochondrion-targeting transit peptide spans 1–29; it reads MAALVRISSLCHRGVSPLLFRPSSLIRPL. Over 30–62 the chain is Mitochondrial matrix; that stretch reads AVQQKDHDCSYLISARIHATPSNYAGSGSKAAT. A helical transmembrane segment spans residues 63 to 84; sequence MHWTGERILSIALLSLAPVAYF. At 85–89 the chain is on the mitochondrial intermembrane side; it reads CPSPA. A helical transmembrane segment spans residues 90-110; sequence VDYSLAAALTLHGHWGLGQVV. A heme b-binding site is contributed by His101. The Mitochondrial matrix portion of the chain corresponds to 111 to 119; sequence TDYVHGDAK. Tyr113 provides a ligand contact to a ubiquinone. Residues 120 to 141 traverse the membrane as a helical segment; it reads IKMANAGLFVLSTVTFAGLCYF. The Mitochondrial intermembrane segment spans residues 142 to 158; the sequence is NYHDVGICKAVALLWSK.

The protein belongs to the CybS family. As to quaternary structure, component of complex II composed of four subunits: the flavoprotein (FP) SDHA, iron-sulfur protein (IP) SDHB, and a cytochrome b560 composed of SDHC and SDHD.

The protein resides in the mitochondrion inner membrane. The protein operates within carbohydrate metabolism; tricarboxylic acid cycle. Membrane-anchoring subunit of succinate dehydrogenase (SDH) that is involved in complex II of the mitochondrial electron transport chain and is responsible for transferring electrons from succinate to ubiquinone (coenzyme Q). SDH also oxidizes malate to the non-canonical enol form of oxaloacetate, enol-oxaloacetate. Enol-oxaloacetate, which is a potent inhibitor of the succinate dehydrogenase activity, is further isomerized into keto-oxaloacetate. The sequence is that of Succinate dehydrogenase [ubiquinone] cytochrome b small subunit B, mitochondrial (sdhdb) from Danio rerio (Zebrafish).